We begin with the raw amino-acid sequence, 324 residues long: NAD(P)H-dependent D-xylose reductase I,II (324 aa).

Catalysis depends on Tyr-54, which acts as the Proton donor. His-116 serves as a coordination point for substrate. Residues Ser-171–Asn-172, Ser-220–Glu-229, and Lys-276–Asn-286 each bind NAD(+).

It belongs to the aldo/keto reductase family.

It catalyses the reaction xylitol + NAD(+) = D-xylose + NADH + H(+). The enzyme catalyses xylitol + NADP(+) = D-xylose + NADPH + H(+). Its pathway is carbohydrate metabolism; D-xylose degradation. In terms of biological role, reduces D-xylose into xylitol. Has a preference for NADPH, but can also utilize NADH as cosubstrate. The sequence is that of NAD(P)H-dependent D-xylose reductase I,II (xyrA) from Candida tropicalis (Yeast).